We begin with the raw amino-acid sequence, 63 residues long: Small ribosomal subunit protein eS17 (63 aa).

Belongs to the eukaryotic ribosomal protein eS17 family.

This is Small ribosomal subunit protein eS17 (rps17e) from Haloarcula marismortui (strain ATCC 43049 / DSM 3752 / JCM 8966 / VKM B-1809) (Halobacterium marismortui).